Consider the following 278-residue polypeptide: Dermonecrotic toxin LspiSicTox-betaIE2iii (278 aa).

His5 is an active-site residue. Residues Glu25 and Asp27 each contribute to the Mg(2+) site. His41 serves as the catalytic Nucleophile. Disulfide bonds link Cys45/Cys51 and Cys47/Cys190. A Mg(2+)-binding site is contributed by Asp85.

It belongs to the arthropod phospholipase D family. Class II subfamily. It depends on Mg(2+) as a cofactor. In terms of tissue distribution, expressed by the venom gland.

It is found in the secreted. The catalysed reaction is an N-(acyl)-sphingosylphosphocholine = an N-(acyl)-sphingosyl-1,3-cyclic phosphate + choline. The enzyme catalyses an N-(acyl)-sphingosylphosphoethanolamine = an N-(acyl)-sphingosyl-1,3-cyclic phosphate + ethanolamine. It carries out the reaction a 1-acyl-sn-glycero-3-phosphocholine = a 1-acyl-sn-glycero-2,3-cyclic phosphate + choline. It catalyses the reaction a 1-acyl-sn-glycero-3-phosphoethanolamine = a 1-acyl-sn-glycero-2,3-cyclic phosphate + ethanolamine. Functionally, dermonecrotic toxins cleave the phosphodiester linkage between the phosphate and headgroup of certain phospholipids (sphingolipid and lysolipid substrates), forming an alcohol (often choline) and a cyclic phosphate. This toxin acts on sphingomyelin (SM). It may also act on ceramide phosphoethanolamine (CPE), lysophosphatidylcholine (LPC) and lysophosphatidylethanolamine (LPE), but not on lysophosphatidylserine (LPS), and lysophosphatidylglycerol (LPG). It acts by transphosphatidylation, releasing exclusively cyclic phosphate products as second products. Induces dermonecrosis, hemolysis, increased vascular permeability, edema, inflammatory response, and platelet aggregation. In Loxosceles spinulosa (Recluse spider), this protein is Dermonecrotic toxin LspiSicTox-betaIE2iii.